A 329-amino-acid chain; its full sequence is Beta-ketoacyl-[acyl-carrier-protein] synthase III (329 aa).

Catalysis depends on residues Cys-113 and His-255. Residues 256-260 (QANQR) are ACP-binding. The active site involves Asn-285.

Belongs to the thiolase-like superfamily. FabH family. As to quaternary structure, homodimer.

The protein localises to the cytoplasm. The enzyme catalyses malonyl-[ACP] + acetyl-CoA + H(+) = 3-oxobutanoyl-[ACP] + CO2 + CoA. The protein operates within lipid metabolism; fatty acid biosynthesis. Catalyzes the condensation reaction of fatty acid synthesis by the addition to an acyl acceptor of two carbons from malonyl-ACP. Catalyzes the first condensation reaction which initiates fatty acid synthesis and may therefore play a role in governing the total rate of fatty acid production. Possesses both acetoacetyl-ACP synthase and acetyl transacylase activities. Its substrate specificity determines the biosynthesis of branched-chain and/or straight-chain of fatty acids. The chain is Beta-ketoacyl-[acyl-carrier-protein] synthase III from Chlorobium luteolum (strain DSM 273 / BCRC 81028 / 2530) (Pelodictyon luteolum).